The chain runs to 499 residues: L-arabinose isomerase (499 aa).

The Mn(2+) site is built by Glu306, Glu333, His350, and His449.

This sequence belongs to the arabinose isomerase family. It depends on Mn(2+) as a cofactor.

It carries out the reaction beta-L-arabinopyranose = L-ribulose. The protein operates within carbohydrate degradation; L-arabinose degradation via L-ribulose; D-xylulose 5-phosphate from L-arabinose (bacterial route): step 1/3. Catalyzes the conversion of L-arabinose to L-ribulose. The sequence is that of L-arabinose isomerase from Tolumonas auensis (strain DSM 9187 / NBRC 110442 / TA 4).